Here is a 366-residue protein sequence, read N- to C-terminus: Peptide chain release factor 2 (366 aa).

Gln-253 bears the N5-methylglutamine mark.

The protein belongs to the prokaryotic/mitochondrial release factor family. In terms of processing, methylated by PrmC. Methylation increases the termination efficiency of RF2.

Its subcellular location is the cytoplasm. Its function is as follows. Peptide chain release factor 2 directs the termination of translation in response to the peptide chain termination codons UGA and UAA. The protein is Peptide chain release factor 2 (prfB) of Buchnera aphidicola subsp. Baizongia pistaciae (strain Bp).